The primary structure comprises 199 residues: Recombination protein RecR (199 aa).

The C4-type zinc finger occupies 58 to 73; it reads CQRCNNFSEEAVCQRC. The Toprim domain occupies 81–176; sequence ATLCVVEMPA…KVSRISRGVP (96 aa).

It belongs to the RecR family.

Functionally, may play a role in DNA repair. It seems to be involved in an RecBC-independent recombinational process of DNA repair. It may act with RecF and RecO. This Azoarcus sp. (strain BH72) protein is Recombination protein RecR.